Consider the following 362-residue polypeptide: Nicotinate-nucleotide--dimethylbenzimidazole phosphoribosyltransferase (362 aa).

Glu321 serves as the catalytic Proton acceptor.

Belongs to the CobT family.

The catalysed reaction is 5,6-dimethylbenzimidazole + nicotinate beta-D-ribonucleotide = alpha-ribazole 5'-phosphate + nicotinate + H(+). The protein operates within nucleoside biosynthesis; alpha-ribazole biosynthesis; alpha-ribazole from 5,6-dimethylbenzimidazole: step 1/2. Catalyzes the synthesis of alpha-ribazole-5'-phosphate from nicotinate mononucleotide (NAMN) and 5,6-dimethylbenzimidazole (DMB). The protein is Nicotinate-nucleotide--dimethylbenzimidazole phosphoribosyltransferase of Clostridium tetani (strain Massachusetts / E88).